The primary structure comprises 426 residues: UPF0761 membrane protein Nmul_A0452 (426 aa).

The next 6 helical transmembrane spans lie at 48 to 68 (LLSLVPMLAIGLSVIAAFPAF), 106 to 126 (LTAIGIAFLGVTALALMLTID), 145 to 165 (LLIYWSVLTIGPLLIGASLSL), 187 to 207 (LLRLSPLVLTSIAFSASYLIV), 217 to 237 (AIAGGVAAAIGFEIMKEGFAF), and 255 to 275 (IPIFLLWLYLSWLMVLLGAVI).

Belongs to the UPF0761 family.

The protein resides in the cell inner membrane. This Nitrosospira multiformis (strain ATCC 25196 / NCIMB 11849 / C 71) protein is UPF0761 membrane protein Nmul_A0452.